The chain runs to 734 residues: Photosystem I P700 chlorophyll a apoprotein A2 (734 aa).

8 helical membrane passes run isoleucine 46 to alanine 69, leucine 135 to glutamine 158, leucine 175 to isoleucine 199, methionine 273 to tyrosine 291, leucine 330 to tyrosine 353, alanine 369 to isoleucine 395, alanine 417 to histidine 439, and phenylalanine 517 to valine 535. [4Fe-4S] cluster contacts are provided by cysteine 559 and cysteine 568. Transmembrane regions (helical) follow at residues alanine 575–tryptophan 596 and leucine 643–isoleucine 665. Positions 654, 662, and 670 each coordinate chlorophyll a. Tryptophan 671 is a phylloquinone binding site. The chain crosses the membrane as a helical span at residues leucine 707 to alanine 727.

This sequence belongs to the PsaA/PsaB family. The PsaA/B heterodimer binds the P700 chlorophyll special pair and subsequent electron acceptors. PSI consists of a core antenna complex that captures photons, and an electron transfer chain that converts photonic excitation into a charge separation. The eukaryotic PSI reaction center is composed of at least 11 subunits. The cofactor is P700 is a chlorophyll a/chlorophyll a' dimer, A0 is one or more chlorophyll a, A1 is one or both phylloquinones and FX is a shared 4Fe-4S iron-sulfur center..

The protein localises to the plastid. It localises to the chloroplast thylakoid membrane. The catalysed reaction is reduced [plastocyanin] + hnu + oxidized [2Fe-2S]-[ferredoxin] = oxidized [plastocyanin] + reduced [2Fe-2S]-[ferredoxin]. Functionally, psaA and PsaB bind P700, the primary electron donor of photosystem I (PSI), as well as the electron acceptors A0, A1 and FX. PSI is a plastocyanin-ferredoxin oxidoreductase, converting photonic excitation into a charge separation, which transfers an electron from the donor P700 chlorophyll pair to the spectroscopically characterized acceptors A0, A1, FX, FA and FB in turn. Oxidized P700 is reduced on the lumenal side of the thylakoid membrane by plastocyanin. This chain is Photosystem I P700 chlorophyll a apoprotein A2, found in Populus alba (White poplar).